The sequence spans 191 residues: Protein Ves (191 aa).

It belongs to the Ves family.

This chain is Protein Ves, found in Escherichia coli (strain 55989 / EAEC).